We begin with the raw amino-acid sequence, 281 residues long: NADPH-dependent 7-cyano-7-deazaguanine reductase (281 aa).

Position 89–91 (89–91 (VES)) interacts with substrate. 91–92 (SK) lines the NADPH pocket. Cys188 (thioimide intermediate) is an active-site residue. The active-site Proton donor is Asp195. 227-228 (HE) is a binding site for substrate. 256 to 257 (RG) lines the NADPH pocket.

This sequence belongs to the GTP cyclohydrolase I family. QueF type 2 subfamily. Homodimer.

It is found in the cytoplasm. The catalysed reaction is 7-aminomethyl-7-carbaguanine + 2 NADP(+) = 7-cyano-7-deazaguanine + 2 NADPH + 3 H(+). Its pathway is tRNA modification; tRNA-queuosine biosynthesis. Its function is as follows. Catalyzes the NADPH-dependent reduction of 7-cyano-7-deazaguanine (preQ0) to 7-aminomethyl-7-deazaguanine (preQ1). The polypeptide is NADPH-dependent 7-cyano-7-deazaguanine reductase (Azoarcus sp. (strain BH72)).